We begin with the raw amino-acid sequence, 649 residues long: Transmembrane and coiled-coil domains protein 1 (649 aa).

M1 bears the N-acetylmethionine mark. 4 disordered regions span residues 1–37, 58–83, 110–166, and 197–222; these read MEPS…LSKM, HQRR…EVDL, RVPP…PTSS, and LAQT…GIPD. Residues 1 to 587 are Cytoplasmic-facing; the sequence is MEPSGSEQLY…ARNLLGKLIN (587 aa). Residues 20–34 show a composition bias toward basic and acidic residues; that stretch reads QDAEARRQTESEQKL. Polar residues predominate over residues 64 to 75; it reads SVSPHDVQQIQT. The span at 113-125 shows a compositional bias: basic residues; sequence PKMKRGTSLHSRR. Low complexity predominate over residues 156 to 166; sequence SSSTTDAPTSS. Polar residues predominate over residues 197–214; it reads LAQTSSAVASSTDGSIHT. Residues 224 to 310 are a coiled coil; the sequence is QRTKAAIAHL…KLREVEQNGI (87 aa). A phosphoserine mark is found at S378 and S410. The interval 411–433 is disordered; sequence PKYGSEEDCSSATSGSVGANSTT. The segment covering 420–433 has biased composition (polar residues); sequence SSATSGSVGANSTT. Residues 457-566 are a coiled coil; it reads ALLHEVQEIR…KMELQQQQQQ (110 aa). 2 helical membrane passes run 588-608 and 621-641; these read ILLA…NCVV and LFLV…FSYV. Residues 642-649 are Cytoplasmic-facing; it reads DRLFSPPR.

This sequence belongs to the TEX28 family. In terms of assembly, may form homodimers and heterodimers with TMCC2 or TMCC3 via the coiled-coil domains. Interacts with ribosomal proteins RPL4 and RPS6.

The protein localises to the endoplasmic reticulum membrane. In terms of biological role, endoplasmic reticulum membrane protein that promotes endoplasmic reticulum-associated endosome fission. Localizes to contact sites between the endoplasmic reticulum and endosomes and acts by promoting recruitment of the endoplasmic reticulum to endosome tubules for fission. Endosome membrane fission of early and late endosomes is essential to separate regions destined for lysosomal degradation from carriers to be recycled to the plasma membrane. The protein is Transmembrane and coiled-coil domains protein 1 (Tmcc1) of Mus musculus (Mouse).